We begin with the raw amino-acid sequence, 111 residues long: UPF0060 membrane protein Krad_3114 (111 aa).

A run of 4 helical transmembrane segments spans residues 7 to 27 (IALF…VWQG), 33 to 53 (GLAW…AATL), 62 to 82 (VLAA…AVVD), and 88 to 108 (RFDV…MYAP).

It belongs to the UPF0060 family.

It is found in the cell membrane. The sequence is that of UPF0060 membrane protein Krad_3114 from Kineococcus radiotolerans (strain ATCC BAA-149 / DSM 14245 / SRS30216).